The chain runs to 113 residues: Phosphoribosyl-ATP pyrophosphatase (113 aa).

This sequence belongs to the PRA-PH family.

The protein localises to the cytoplasm. It catalyses the reaction 1-(5-phospho-beta-D-ribosyl)-ATP + H2O = 1-(5-phospho-beta-D-ribosyl)-5'-AMP + diphosphate + H(+). The protein operates within amino-acid biosynthesis; L-histidine biosynthesis; L-histidine from 5-phospho-alpha-D-ribose 1-diphosphate: step 2/9. This is Phosphoribosyl-ATP pyrophosphatase from Janthinobacterium sp. (strain Marseille) (Minibacterium massiliensis).